A 98-amino-acid polypeptide reads, in one-letter code: NADH-ubiquinone oxidoreductase chain 4L (98 aa).

Helical transmembrane passes span 1–21 (MTMV…GLLM), 29–49 (SLLC…VTIL), and 61–81 (IILL…LVMV).

Belongs to the complex I subunit 4L family. Core subunit of respiratory chain NADH dehydrogenase (Complex I) which is composed of 45 different subunits.

It localises to the mitochondrion inner membrane. It catalyses the reaction a ubiquinone + NADH + 5 H(+)(in) = a ubiquinol + NAD(+) + 4 H(+)(out). Its function is as follows. Core subunit of the mitochondrial membrane respiratory chain NADH dehydrogenase (Complex I) which catalyzes electron transfer from NADH through the respiratory chain, using ubiquinone as an electron acceptor. Part of the enzyme membrane arm which is embedded in the lipid bilayer and involved in proton translocation. The polypeptide is NADH-ubiquinone oxidoreductase chain 4L (MT-ND4L) (Leptonychotes weddellii (Weddell seal)).